The sequence spans 347 residues: Heme A synthase (347 aa).

The next 8 membrane-spanning stretches (helical) occupy residues 17–37 (LANW…VGGI), 106–126 (GIGA…AIPA), 132–152 (MIGI…MVYS), 165–185 (LATH…TVLD), 202–222 (ALAI…AFVA), 260–280 (IVVQ…ALAV), 295–315 (AVAT…LTGV), and 317–337 (IAVA…LLWA). His-266 lines the heme pocket. A heme-binding site is contributed by His-323.

Belongs to the COX15/CtaA family. Type 2 subfamily. As to quaternary structure, interacts with CtaB. It depends on heme b as a cofactor.

The protein localises to the cell membrane. The enzyme catalyses Fe(II)-heme o + 2 A + H2O = Fe(II)-heme a + 2 AH2. It participates in porphyrin-containing compound metabolism; heme A biosynthesis; heme A from heme O: step 1/1. Functionally, catalyzes the conversion of heme O to heme A by two successive hydroxylations of the methyl group at C8. The first hydroxylation forms heme I, the second hydroxylation results in an unstable dihydroxymethyl group, which spontaneously dehydrates, resulting in the formyl group of heme A. In Rhizorhabdus wittichii (strain DSM 6014 / CCUG 31198 / JCM 15750 / NBRC 105917 / EY 4224 / RW1) (Sphingomonas wittichii), this protein is Heme A synthase.